A 439-amino-acid chain; its full sequence is Histone acetyltransferase GCN5 (439 aa).

2 stretches are compositionally biased toward basic and acidic residues: residues 1–28 and 39–59; these read MVTK…KLEN and ETNK…KETE. The interval 1-59 is disordered; that stretch reads MVTKHQIEEDHLDGATTDPEVKRVKLENNVEEIQPEQAETNKQEGTDKENKGKFEKETE. One can recognise an N-acetyltransferase domain in the interval 100 to 255; sequence IEFRVVNNDN…GGTLMQCSML (156 aa). Glutamate 173 (proton donor/acceptor) is an active-site residue. Residues 177 to 179, 184 to 190, and 216 to 219 each bind acetyl-CoA; these read CAI, QVRGYGA, and YAIG. The Bromo domain occupies 327-431; it reads PKRGPHDAAI…KFFNNKVKEI (105 aa).

The protein belongs to the acetyltransferase family. GCN5 subfamily. As to quaternary structure, component of the 1.8 MDa SAGA (Spt-Ada-Gcn5 acetyltransferase) complex, which is composed of 19 subunits TRA1, SPT7, TAF5, NGG1/ADA3, SGF73, SPT20/ADA5, SPT8, TAF12, TAF6, HFI1/ADA1, UBP8, GCN5, ADA2, SPT3, SGF29, TAF10, TAF9, SGF11 and SUS1. The SAGA complex is composed of 4 modules, namely the HAT (histone acetyltransferase) module (GCN5, ADA2, NGG1/ADA3 and SGF29), the DUB (deubiquitinating) module (UBP8, SGF11, SGF73 and SUS1), the core or TAF (TBP-associated factor) module (TAF5, TAF6, TAF9, TAF10 and TAF12), and the Tra1 or SPT (Suppressor of Ty) module (TRA1, HFI1/ADA1, SPT3, SPT7, SPT8 and SPT20/ADA5). The Tra1/SPT module binds activators, the core module recruits TBP (TATA-binding protein), the HAT module contains the histone H3 acetyltransferase GCN5, and the DUB module comprises the histone H2B deubiquitinase UBP8. Also identified in an altered form of SAGA, named SALSA (SAGA altered, Spt8 absent) or SLIK (SAGA-like) complex, which contains a C-terminal truncated form of SPT7 and is missing SPT8. However, it has been shown that the SAGA and SAGA-like SALSA/SLIK transcriptional coactivators are structurally and biochemically equivalent. Component of the 0.8 MDa ADA complex, a HAT complex distinct from SAGA, which at least consists of ADA2, NGG1/ADA3, AHC1, AHC2, SGF29 and GCN5. Component of an ADA/GCN5 complex that consists of HFI1/ADA1, ADA2, NGG1/ADA3, SPT20/ADA5 and GCN5 and probably is a subcomplex of SAGA.

Its subcellular location is the nucleus. The protein resides in the cytoplasm. It carries out the reaction L-lysyl-[protein] + acetyl-CoA = N(6)-acetyl-L-lysyl-[protein] + CoA + H(+). The enzyme catalyses (2E)-butenoyl-CoA + L-lysyl-[protein] = N(6)-(2E)-butenoyl-L-lysyl-[protein] + CoA + H(+). Its function is as follows. Histone acetyltransferase that acetylates histone H2B to form H2BK11ac and H2BK16ac, histone H3 to form H3K9ac, H3K14ac, H3K18ac, H3K23ac, H3K27ac and H3K36ac, with a lower preference histone H4 to form H4K8ac and H4K16ac, and contributes to H2A.Z acetylation. Acetylation of histones gives a specific tag for epigenetic transcription activation and elongation. Operates in concert with certain DNA-binding transcriptional activators such as GCN4 or HAP2/3/4. Its acetyltransferase activity seems to be dependent on the association in different multisubunit complexes. Component of the transcription coactivator SAGA complex. SAGA acts as a general cofactor required for essentially all RNA polymerase II transcription. At the promoters, SAGA is required for transcription pre-initiation complex (PIC) recruitment. It influences RNA polymerase II transcriptional activity through different activities such as TBP interaction (via core/TAF module) and promoter selectivity, interaction with transcription activators (via Tra1/SPT module), and chromatin modification through histone acetylation (via HAT module) and deubiquitination (via DUB module). SAGA preferentially acetylates histones H3 (to form H3K9ac, H3K14ac, H3K18ac and H3K23ac) and H2B and deubiquitinates histone H2B. SAGA interacts with DNA via upstream activating sequences (UASs). Also identified in a modified version of SAGA named SALSA or SLIK. The cleavage of SPT7 and the absence of the SPT8 subunit in SLIK neither drive any major conformational differences in its structure compared with SAGA, nor significantly affect HAT, DUB, or DNA-binding activities. Component of the ADA histone acetyltransferase complex, which preferentially acetylates nucleosomal histones H3 (to form H3K14ac and H3K18ac) and H2B. In addition to histone acetyltransferase, can use different acyl-CoA substrates, such as (2E)-butenoyl-CoA (crotonyl-CoA) and is able to mediate histone crotonylation. Controls the metaphase-to-anaphase transition and is required for correct chromosome segregation and centromere/kinetochore function in mitosis. May be involved in response to DNA damage by genotoxic agents. This is Histone acetyltransferase GCN5 from Saccharomyces cerevisiae (strain ATCC 204508 / S288c) (Baker's yeast).